A 198-amino-acid chain; its full sequence is MGTHVAPWKQLLFGAIEANSHLSHSSYVQLATIGLNGRPSNRTVVFRGFEENSDRIQINTDLRSRKIEELKHCPFSEMCWYFSDTWEQFRINGRIEVIDASNPDQTKLQQREKAWFANSLRSRLIYVCPTPGSPCNSEQSSQQVKLDPSSGPVPEYCLLLLEPEKVDYLNLKTNQRLFFSSMATGTGEKCWTSEKVNP.

FMN-binding positions include R42, 59 to 60 (NT), K66, and 121 to 122 (RS).

The protein belongs to the pyridoxamine 5'-phosphate oxidase family. As to quaternary structure, homodimer. FMN is required as a cofactor.

The enzyme catalyses pyridoxamine 5'-phosphate + O2 + H2O = pyridoxal 5'-phosphate + H2O2 + NH4(+). It catalyses the reaction pyridoxine 5'-phosphate + O2 = pyridoxal 5'-phosphate + H2O2. The protein operates within cofactor metabolism; pyridoxal 5'-phosphate salvage; pyridoxal 5'-phosphate from pyridoxamine 5'-phosphate: step 1/1. It participates in cofactor metabolism; pyridoxal 5'-phosphate salvage; pyridoxal 5'-phosphate from pyridoxine 5'-phosphate: step 1/1. Catalyzes the oxidation of either pyridoxine 5'-phosphate (PNP) or pyridoxamine 5'-phosphate (PMP) into pyridoxal 5'-phosphate (PLP). Has an in vitro catalytic efficiency for PNP approximately 300-fold lower than that of PPOX1. This is Pyridoxine/pyridoxamine 5'-phosphate oxidase 2 (PPOX2) from Arabidopsis thaliana (Mouse-ear cress).